Here is a 572-residue protein sequence, read N- to C-terminus: Urease subunit alpha (572 aa).

Residues 134–572 (GGIDSHIHFI…LPLTQRYFLF (439 aa)) form the Urease domain. Residues histidine 139, histidine 141, and lysine 222 each contribute to the Ni(2+) site. Lysine 222 carries the post-translational modification N6-carboxylysine. Residue histidine 224 coordinates substrate. Residues histidine 251 and histidine 277 each contribute to the Ni(2+) site. The Proton donor role is filled by histidine 325. Ni(2+) is bound at residue aspartate 365.

It belongs to the metallo-dependent hydrolases superfamily. Urease alpha subunit family. In terms of assembly, heterotrimer of UreA (gamma), UreB (beta) and UreC (alpha) subunits. Three heterotrimers associate to form the active enzyme. Ni cation serves as cofactor. Carboxylation allows a single lysine to coordinate two nickel ions.

Its subcellular location is the cytoplasm. The catalysed reaction is urea + 2 H2O + H(+) = hydrogencarbonate + 2 NH4(+). It functions in the pathway nitrogen metabolism; urea degradation; CO(2) and NH(3) from urea (urease route): step 1/1. This Variovorax paradoxus (strain S110) protein is Urease subunit alpha.